Here is a 361-residue protein sequence, read N- to C-terminus: MSDLESLKTSLLADIAAASDEVGIEAVRLAAMGKKGSVSELLKTLGSMTPEERQTRGAAINALKNEITEQLTAKKTELKDAAINARLKAETLDVSLPVRSSPAERGRIHPISQIVDEITAIFADMGFSIAEGPDIETDYYNFTALNFPEGHPAREMHDTFFLQPDANGERKVLRTHTSPVQVRTMEAQKPPIRIVIPGKTYRQDSDATHSPMFHQVEGLVIDKTANVGHLRWILEEFCKTFFEVDSVTMRFRPSFFPFTEPSFEVDIQCDRSSGPIVKFGEGKDWMEILGCGMVHPNVLRAGGLDPDEYQGFAWGMGLDRIAMLKYGMPDLRDFFNADVRWMSHYGFRPLDVPTLFGGLSV.

Position 260 (glutamate 260) interacts with Mg(2+).

Belongs to the class-II aminoacyl-tRNA synthetase family. Phe-tRNA synthetase alpha subunit type 1 subfamily. As to quaternary structure, tetramer of two alpha and two beta subunits. Mg(2+) serves as cofactor.

The protein localises to the cytoplasm. The enzyme catalyses tRNA(Phe) + L-phenylalanine + ATP = L-phenylalanyl-tRNA(Phe) + AMP + diphosphate + H(+). The chain is Phenylalanine--tRNA ligase alpha subunit from Allorhizobium ampelinum (strain ATCC BAA-846 / DSM 112012 / S4) (Agrobacterium vitis (strain S4)).